Here is a 172-residue protein sequence, read N- to C-terminus: Crossover junction endodeoxyribonuclease RuvC (172 aa).

Active-site residues include Asp-11, Glu-70, and Asp-142. Mg(2+)-binding residues include Asp-11, Glu-70, and Asp-142.

The protein belongs to the RuvC family. As to quaternary structure, homodimer which binds Holliday junction (HJ) DNA. The HJ becomes 2-fold symmetrical on binding to RuvC with unstacked arms; it has a different conformation from HJ DNA in complex with RuvA. In the full resolvosome a probable DNA-RuvA(4)-RuvB(12)-RuvC(2) complex forms which resolves the HJ. Mg(2+) is required as a cofactor.

The protein localises to the cytoplasm. The enzyme catalyses Endonucleolytic cleavage at a junction such as a reciprocal single-stranded crossover between two homologous DNA duplexes (Holliday junction).. In terms of biological role, the RuvA-RuvB-RuvC complex processes Holliday junction (HJ) DNA during genetic recombination and DNA repair. Endonuclease that resolves HJ intermediates. Cleaves cruciform DNA by making single-stranded nicks across the HJ at symmetrical positions within the homologous arms, yielding a 5'-phosphate and a 3'-hydroxyl group; requires a central core of homology in the junction. The consensus cleavage sequence is 5'-(A/T)TT(C/G)-3'. Cleavage occurs on the 3'-side of the TT dinucleotide at the point of strand exchange. HJ branch migration catalyzed by RuvA-RuvB allows RuvC to scan DNA until it finds its consensus sequence, where it cleaves and resolves the cruciform DNA. This is Crossover junction endodeoxyribonuclease RuvC from Hydrogenovibrio crunogenus (strain DSM 25203 / XCL-2) (Thiomicrospira crunogena).